Reading from the N-terminus, the 264-residue chain is Galectin-3 (264 aa).

A disordered region spans residues 1–105 (MADSFSLNDA…GAFPGQPGAP (105 aa)). Residue alanine 2 is modified to N-acetylalanine. The residue at position 6 (serine 6) is a Phosphoserine; by CK1. Repeat copies occupy residues 35–43 (YPGAAYPGA), 44–52 (YPGQAPPGA), 53–61 (YPGQAPPGA), 62–70 (YPGQAPPSA), 71–79 (YPGPTAPGA), 80–88 (YPGPTAPGA), 89–97 (YPGQPAPGA), and 98–107 (FPGQPGAPGA). Residues 35 to 114 (YPGAAYPGAY…PGAYPQCSGG (80 aa)) are 9 X 9 AA tandem repeats of Y-P-G-X(3)-P-[GS]-A. The span at 37-46 (GAAYPGAYPG) shows a compositional bias: low complexity. Positions 47–75 (QAPPGAYPGQAPPGAYPGQAPPSAYPGPT) are enriched in pro residues. Residues 76–105 (APGAYPGPTAPGAYPGQPAPGAFPGQPGAP) are compositionally biased toward low complexity. One copy of the 9; truncated repeat lies at 108-114 (YPQCSGG). A Galectin domain is found at 132–262 (YDLPLPGGVM…DITLTSANHA (131 aa)). 195–201 (WGKEERQ) provides a ligand contact to a beta-D-galactoside. Residue serine 202 is modified to Phosphoserine. A Nuclear export signal motif is present at residues 240–255 (KNLREISQLGISGDIT).

In terms of assembly, probably forms homo- or heterodimers. Interacts with DMBT1. Interacts with CD6 and ALCAM. Forms a complex with the ITGA3, ITGB1 and CSPG4. Interacts with LGALS3BP, LYPD3, ZFTRAF1 and UACA. Interacts with TRIM16; this interaction mediates autophagy of damage endomembranes. Interacts with and inhibits by binding NCR3/NKp30. As to expression, the highest levels are found in activated macrophages.

It is found in the cytoplasm. The protein localises to the nucleus. Its subcellular location is the secreted. Its function is as follows. Galactose-specific lectin which binds IgE. May mediate with the alpha-3, beta-1 integrin the stimulation by CSPG4 of endothelial cells migration. Together with DMBT1, required for terminal differentiation of columnar epithelial cells during early embryogenesis. In the nucleus: acts as a pre-mRNA splicing factor. Involved in acute inflammatory responses including neutrophil activation and adhesion, chemoattraction of monocytes macrophages, opsonization of apoptotic neutrophils, and activation of mast cells. Together with TRIM16, coordinates the recognition of membrane damage with mobilization of the core autophagy regulators ATG16L1 and BECN1 in response to damaged endomembranes. When secreted, interacts with NK cell-activating receptor NCR3/NKp30 acting as an inhibitory ligand which antagonizes NK cell attack. This chain is Galectin-3 (Lgals3), found in Mus musculus (Mouse).